The sequence spans 485 residues: Argininosuccinate lyase (485 aa).

Belongs to the lyase 1 family. Argininosuccinate lyase subfamily.

The protein resides in the cytoplasm. The catalysed reaction is 2-(N(omega)-L-arginino)succinate = fumarate + L-arginine. It participates in amino-acid biosynthesis; L-arginine biosynthesis; L-arginine from L-ornithine and carbamoyl phosphate: step 3/3. This chain is Argininosuccinate lyase, found in Paracidovorax citrulli (strain AAC00-1) (Acidovorax citrulli).